A 388-amino-acid polypeptide reads, in one-letter code: Alanine racemase 1 (388 aa).

The active-site Proton acceptor; specific for D-alanine is lysine 40. At lysine 40 the chain carries N6-(pyridoxal phosphate)lysine. Arginine 138 lines the substrate pocket. Catalysis depends on tyrosine 268, which acts as the Proton acceptor; specific for L-alanine. Residue methionine 316 coordinates substrate.

The protein belongs to the alanine racemase family. Requires pyridoxal 5'-phosphate as cofactor.

It catalyses the reaction L-alanine = D-alanine. It functions in the pathway amino-acid biosynthesis; D-alanine biosynthesis; D-alanine from L-alanine: step 1/1. Functionally, catalyzes the interconversion of L-alanine and D-alanine. May also act on other amino acids. This is Alanine racemase 1 (alr1) from Caldanaerobacter subterraneus subsp. tengcongensis (strain DSM 15242 / JCM 11007 / NBRC 100824 / MB4) (Thermoanaerobacter tengcongensis).